A 419-amino-acid polypeptide reads, in one-letter code: MIKLIRGFRDILPGQVELWQDIESKARVLLENFGFREIRLPIMESTELFARGIGADTDIVEKEMYTFPDSKGRGQTLRPEATASVVRSYIEHGYAGSDPVQKFYTIGPMFRHERPQKGRYRQFYQINAEMFGVASPLADVQIMYMLHLFFTGLDVPDVVTHVNSLGCPECRPKFREALISFVSDKMDRLCSDCQRRADANPLRVIDCKVPGCKEAVQGAPSIQDHLCPDCKEHFEAVIKGLDGLNVPYEIDPRLVRGLDYYTRTTFEVQTTLLGAQNAVAGGGRYDGLVKILGGKETPAIGFAVGFDRLAALLGAEEKDFTVPPALFIAALGDEARKIAFGWLCDFNARGVRAEMDYEGKSLKSQMKQANRFNAGRVLILGENELQNGMAVLRNMDTKEQEEVALDGLTDRVAALINQG.

Belongs to the class-II aminoacyl-tRNA synthetase family. As to quaternary structure, homodimer.

It localises to the cytoplasm. It catalyses the reaction tRNA(His) + L-histidine + ATP = L-histidyl-tRNA(His) + AMP + diphosphate + H(+). The polypeptide is Histidine--tRNA ligase (Desulfatibacillum aliphaticivorans).